Consider the following 307-residue polypeptide: Aspartate carbamoyltransferase catalytic subunit (307 aa).

Carbamoyl phosphate contacts are provided by R58 and T59. K86 is an L-aspartate binding site. Carbamoyl phosphate contacts are provided by R108, H136, and Q139. L-aspartate contacts are provided by R169 and R223. Residues G264 and P265 each coordinate carbamoyl phosphate.

Belongs to the aspartate/ornithine carbamoyltransferase superfamily. ATCase family. Heterododecamer (2C3:3R2) of six catalytic PyrB chains organized as two trimers (C3), and six regulatory PyrI chains organized as three dimers (R2).

It catalyses the reaction carbamoyl phosphate + L-aspartate = N-carbamoyl-L-aspartate + phosphate + H(+). The protein operates within pyrimidine metabolism; UMP biosynthesis via de novo pathway; (S)-dihydroorotate from bicarbonate: step 2/3. In terms of biological role, catalyzes the condensation of carbamoyl phosphate and aspartate to form carbamoyl aspartate and inorganic phosphate, the committed step in the de novo pyrimidine nucleotide biosynthesis pathway. The sequence is that of Aspartate carbamoyltransferase catalytic subunit from Moorella thermoacetica (strain ATCC 39073 / JCM 9320).